A 526-amino-acid chain; its full sequence is Amino acid transporter heavy chain SLC3A2 (526 aa).

Residues 1 to 31 (MSQDTEVDMKDVELNELEPEKQPMNAADGAA) are disordered. Topologically, residues 1–75 (MSQDTEVDMK…AGSPGWVRTR (75 aa)) are cytoplasmic. A Phosphoserine modification is found at Ser2. Thr5 is subject to Phosphothreonine. Positions 7–21 (VDMKDVELNELEPEK) are enriched in basic and acidic residues. A Glycyl lysine isopeptide (Lys-Gly) (interchain with G-Cter in ubiquitin) cross-link involves residue Lys42. Phosphoserine is present on Ser58. Lys59 is covalently cross-linked (Glycyl lysine isopeptide (Lys-Gly) (interchain with G-Cter in SUMO2)). Residues 76-99 (WALLLLFWLGWLGMLAGAVVIIVR) traverse the membrane as a helical; Signal-anchor for type II membrane protein segment. The Extracellular segment spans residues 100–526 (APRCRELPVQ…GLLLQFPFVA (427 aa)). N-linked (GlcNAc...) asparagine glycosylation is found at Asn166, Asn259, and Asn263. The residue at position 300 (Ser300) is a Phosphoserine. Asn301 carries N-linked (GlcNAc...) asparagine glycosylation. The residue at position 302 (Ser302) is a Phosphoserine. N-linked (GlcNAc...) asparagine glycans are attached at residues Asn318, Asn385, and Asn399. Ser420 carries the phosphoserine modification. Asn509 carries N-linked (GlcNAc...) asparagine glycosylation.

It belongs to the SLC3A transporter family. As to quaternary structure, disulfide-linked heterodimer with a non-glycosylated light chain (SLC7A5, SLC7A6, SLC7A7, SLC7A8, SLC7A10 or SLC7A11). Interacts with TLCD3A/CT120 and ICAM1. Constitutively and specifically associates with beta-1 integrins (alpha-2/beta-1, alpha-3/beta-1, alpha-5/beta-1 and alpha-6/beta-1), but minimally with alpha-4/beta-1. Interacts with LAPTM4B; recruits SLC3A2 and SLC7A5 to lysosomes to promote leucine uptake into these organelles and is required for mTORC1 activation. Post-translationally, phosphorylation on Ser-300 or Ser-302 and on Ser-420 by ecto-protein kinases favors heterotypic cell-cell interactions. In terms of processing, N-glycosylated; N-glycosylation is crucial for trafficking and stability of SLC3A2 to the plasma membrane. In terms of tissue distribution, detected on the surface of embryonic epithelial cells in the epidermis, thymus, kidney, intestine, brain choroid plexus, and in retina. Detected in adult and embryonic brain, spleen, kidney, intestine and liver, and in adult testis (at protein level). Observed in all adult tissues tested with strongest expression in kidney, small intestine, spleen, thymus and liver. Moderate expression in brain, stomach, heart, testis, lung, skin, pancreas and skeletal muscle. In brain expressed on capillary endothelia in cerebral cortex.

The protein resides in the apical cell membrane. Its subcellular location is the cell membrane. It localises to the cell junction. It is found in the lysosome membrane. The protein localises to the melanosome. The protein resides in the basolateral cell membrane. Acts as a chaperone that facilitates biogenesis and trafficking of functional transporters heterodimers to the plasma membrane. Forms heterodimer with SLC7 family transporters (SLC7A5, SLC7A6, SLC7A7, SLC7A8, SLC7A10 and SLC7A11), a group of amino-acid antiporters. Heterodimers function as amino acids exchangers, the specificity of the substrate depending on the SLC7A subunit. Heterodimers SLC3A2/SLC7A6 or SLC3A2/SLC7A7 mediate the uptake of dibasic amino acids. Heterodimer SLC3A2/SLC7A11 functions as an antiporter by mediating the exchange of extracellular anionic L-cystine and intracellular L-glutamate across the cellular plasma membrane. SLC3A2/SLC7A10 translocates small neutral L- and D-amino acids across the plasma membrane. SLC3A2/SLC75 or SLC3A2/SLC7A8 translocates neutral amino acids with broad specificity, thyroid hormones and L-DOPA. SLC3A2 is essential for plasma membrane localization, stability, and the transport activity of SLC7A5 and SLC7A8. When associated with LAPTM4B, the heterodimer SLC7A5 is recruited to lysosomes to promote leucine uptake into these organelles, and thereby mediates mTORC1 activation. Modulates integrin-related signaling and is essential for integrin-dependent cell spreading, migration and tumor progression. The chain is Amino acid transporter heavy chain SLC3A2 from Mus musculus (Mouse).